The chain runs to 119 residues: uncharacterized protein (119 aa).

Residues 74–91 (LSVHFLLNVISAILSMLI) form a helical membrane-spanning segment.

It is found in the membrane. This is an uncharacterized protein from Schizosaccharomyces pombe (strain 972 / ATCC 24843) (Fission yeast).